A 115-amino-acid chain; its full sequence is MYAIIKTGGKQYRVTEGQMLKVEKLAQDVGQSVKFDDVLMVAAGDELHIGTPSVKDAAVTAEVVDQGRQAKIEIIKFKRRKHHMKRQGHRQDFTAVKVTEIALGKAKKEVKTDGA.

It belongs to the bacterial ribosomal protein bL21 family. In terms of assembly, part of the 50S ribosomal subunit. Contacts protein L20.

Functionally, this protein binds to 23S rRNA in the presence of protein L20. The chain is Large ribosomal subunit protein bL21 from Coxiella burnetii (strain Dugway 5J108-111).